The sequence spans 225 residues: uncharacterized protein (225 aa).

This is an uncharacterized protein from Arabidopsis thaliana (Mouse-ear cress).